Reading from the N-terminus, the 361-residue chain is MATLARLQARSSTVGNQYYFRNSVVDPFRIKENDAAVKIQSWFRGCQVRAYVRHLNRIVTIIQKWWRSFLGRKQYQLTVQVAYYTMMMNLYNAMAVRKQRRWRGYRVRKYLFNYYYLKEYLRVVSETNDAIRKALEEFAEMKEREEKKANLEREEKKRDYQARKMHYLLSTKQIPGIYNSPFRKEPDPWELQLQKAKPLTHRRPKVKQKDSTSLNDWLACTSARSFPRSEILPPINRKQCQGPFRDITEVLEQRYKPLEPTLWVAEPIDELKLAREELRREEWLRNVNDNMFLPFSSYHKNEKYIPSMHLSSKYCPISHKEQFRSENPKKWICDKDFQTVLPSFELFSKYGKLYSKAGQIV.

3 IQ domains span residues 32–61 (ENDAAVKIQSWFRGCQVRAYVRHLNRIVTI), 55–84 (LNRIVTIIQKWWRSFLGRKQYQLTVQVAYY), and 91–120 (YNAMAVRKQRRWRGYRVRKYLFNYYYLKEY).

Its subcellular location is the cytoplasm. This is Spermatogenesis-associated protein 17 (SPATA17) from Macaca fascicularis (Crab-eating macaque).